A 254-amino-acid polypeptide reads, in one-letter code: Glutathione S-transferase U12 (254 aa).

The Nuclear localization signal motif lies at 19-23; the sequence is KKRKK. The region spanning 33-114 is the GST N-terminal domain; that stretch reads TTVKLIGTWA…YVDESWPSDL (82 aa). Glutathione contacts are provided by residues 43 to 44, 71 to 72, 85 to 86, and 98 to 99; these read SP, GK, KV, and ES. The GST C-terminal domain occupies 120–252; that stretch reads LPSERAFARF…EFIEFAKKKF (133 aa).

This sequence belongs to the GST superfamily. Tau family.

It is found in the nucleus. It catalyses the reaction RX + glutathione = an S-substituted glutathione + a halide anion + H(+). In terms of biological role, may be involved in the conjugation of reduced glutathione to a wide number of exogenous and endogenous hydrophobic electrophiles and have a detoxification role against certain herbicides. In Arabidopsis thaliana (Mouse-ear cress), this protein is Glutathione S-transferase U12 (GSTU12).